The chain runs to 76 residues: Large ribosomal subunit protein uL29 (76 aa).

This sequence belongs to the universal ribosomal protein uL29 family.

In Corynebacterium efficiens (strain DSM 44549 / YS-314 / AJ 12310 / JCM 11189 / NBRC 100395), this protein is Large ribosomal subunit protein uL29.